A 134-amino-acid chain; its full sequence is Small ribosomal subunit protein uS8c (134 aa).

Belongs to the universal ribosomal protein uS8 family. In terms of assembly, part of the 30S ribosomal subunit.

The protein localises to the plastid. It localises to the chloroplast. One of the primary rRNA binding proteins, it binds directly to 16S rRNA central domain where it helps coordinate assembly of the platform of the 30S subunit. This chain is Small ribosomal subunit protein uS8c (rps8), found in Arabidopsis thaliana (Mouse-ear cress).